Reading from the N-terminus, the 63-residue chain is Transmembrane protein ZNF593OS (63 aa).

A helical membrane pass occupies residues 30 to 50 (LAGVVATVLAVLGLGGSCYAV).

The protein resides in the membrane. This chain is Transmembrane protein ZNF593OS, found in Homo sapiens (Human).